Consider the following 211-residue polypeptide: MDLSDIRREYIHGGLRRKDLQANPIDQFNLWLQQAIDANLSDPTAMTVATVDEHGQPFQRIVLLKNVDDAGFVFYTNLGSRKAQHIAHNNKISLHFPWHPLERQVHITGVAEKLTAMENMKYFMSRPKESQIAAIASHQSSRISARGVLEGKYLELKQKFANGEIPVPSFWGGYRIRPESLEFWQGGEHRLHDRFLYSRQDDNWTVDRLAP.

Substrate contacts are provided by residues 7-10 (RREY) and K65. FMN-binding positions include 60-65 (RIVLLK), 75-76 (YT), R81, K82, and Q104. Residues Y122, R126, and S130 each contribute to the substrate site. FMN contacts are provided by residues 139–140 (QS) and W184. Residue 190–192 (RLH) coordinates substrate. R194 is an FMN binding site.

The protein belongs to the pyridoxamine 5'-phosphate oxidase family. Homodimer. The cofactor is FMN.

It catalyses the reaction pyridoxamine 5'-phosphate + O2 + H2O = pyridoxal 5'-phosphate + H2O2 + NH4(+). The catalysed reaction is pyridoxine 5'-phosphate + O2 = pyridoxal 5'-phosphate + H2O2. It participates in cofactor metabolism; pyridoxal 5'-phosphate salvage; pyridoxal 5'-phosphate from pyridoxamine 5'-phosphate: step 1/1. It functions in the pathway cofactor metabolism; pyridoxal 5'-phosphate salvage; pyridoxal 5'-phosphate from pyridoxine 5'-phosphate: step 1/1. Functionally, catalyzes the oxidation of either pyridoxine 5'-phosphate (PNP) or pyridoxamine 5'-phosphate (PMP) into pyridoxal 5'-phosphate (PLP). This chain is Pyridoxine/pyridoxamine 5'-phosphate oxidase, found in Vibrio cholerae serotype O1 (strain ATCC 39315 / El Tor Inaba N16961).